The chain runs to 556 residues: Small ribosomal subunit protein uS3m (556 aa).

Belongs to the universal ribosomal protein uS3 family. In terms of assembly, component of the mitochondrial ribosome small subunit.

The protein resides in the mitochondrion. The protein is Small ribosomal subunit protein uS3m (RPS3) of Arabidopsis thaliana (Mouse-ear cress).